We begin with the raw amino-acid sequence, 200 residues long: Methylthioribulose-1-phosphate dehydratase-like protein (200 aa).

This sequence belongs to the aldolase class II family. MtnB subfamily.

The polypeptide is Methylthioribulose-1-phosphate dehydratase-like protein (Schizosaccharomyces pombe (strain 972 / ATCC 24843) (Fission yeast)).